A 177-amino-acid chain; its full sequence is ATP synthase subunit delta (177 aa).

Belongs to the ATPase delta chain family. As to quaternary structure, F-type ATPases have 2 components, F(1) - the catalytic core - and F(0) - the membrane proton channel. F(1) has five subunits: alpha(3), beta(3), gamma(1), delta(1), epsilon(1). F(0) has three main subunits: a(1), b(2) and c(10-14). The alpha and beta chains form an alternating ring which encloses part of the gamma chain. F(1) is attached to F(0) by a central stalk formed by the gamma and epsilon chains, while a peripheral stalk is formed by the delta and b chains.

It is found in the cell inner membrane. In terms of biological role, f(1)F(0) ATP synthase produces ATP from ADP in the presence of a proton or sodium gradient. F-type ATPases consist of two structural domains, F(1) containing the extramembraneous catalytic core and F(0) containing the membrane proton channel, linked together by a central stalk and a peripheral stalk. During catalysis, ATP synthesis in the catalytic domain of F(1) is coupled via a rotary mechanism of the central stalk subunits to proton translocation. Functionally, this protein is part of the stalk that links CF(0) to CF(1). It either transmits conformational changes from CF(0) to CF(1) or is implicated in proton conduction. This chain is ATP synthase subunit delta, found in Haemophilus influenzae (strain PittEE).